Reading from the N-terminus, the 189-residue chain is Thymidine kinase (189 aa).

Residues 9–16 (GTMNSGKT) and 85–88 (DECQ) each bind ATP. The active-site Proton acceptor is glutamate 86. Cysteine 143, cysteine 146, cysteine 180, and histidine 183 together coordinate Zn(2+).

The protein belongs to the thymidine kinase family. As to quaternary structure, homotetramer.

It is found in the cytoplasm. It carries out the reaction thymidine + ATP = dTMP + ADP + H(+). The sequence is that of Thymidine kinase from Streptococcus agalactiae serotype Ia (strain ATCC 27591 / A909 / CDC SS700).